A 363-amino-acid chain; its full sequence is Phosphoserine aminotransferase (363 aa).

Arginine 42 provides a ligand contact to L-glutamate. Pyridoxal 5'-phosphate contacts are provided by tryptophan 105, threonine 155, aspartate 175, and glutamine 198. The residue at position 199 (lysine 199) is an N6-(pyridoxal phosphate)lysine. 240–241 (NT) contributes to the pyridoxal 5'-phosphate binding site.

It belongs to the class-V pyridoxal-phosphate-dependent aminotransferase family. SerC subfamily. Homodimer. The cofactor is pyridoxal 5'-phosphate.

Its subcellular location is the cytoplasm. The catalysed reaction is O-phospho-L-serine + 2-oxoglutarate = 3-phosphooxypyruvate + L-glutamate. The enzyme catalyses 4-(phosphooxy)-L-threonine + 2-oxoglutarate = (R)-3-hydroxy-2-oxo-4-phosphooxybutanoate + L-glutamate. It participates in amino-acid biosynthesis; L-serine biosynthesis; L-serine from 3-phospho-D-glycerate: step 2/3. The protein operates within cofactor biosynthesis; pyridoxine 5'-phosphate biosynthesis; pyridoxine 5'-phosphate from D-erythrose 4-phosphate: step 3/5. Its function is as follows. Catalyzes the reversible conversion of 3-phosphohydroxypyruvate to phosphoserine and of 3-hydroxy-2-oxo-4-phosphonooxybutanoate to phosphohydroxythreonine. This is Phosphoserine aminotransferase from Janthinobacterium sp. (strain Marseille) (Minibacterium massiliensis).